The following is a 172-amino-acid chain: GTP-dependent dephospho-CoA kinase (172 aa).

GTP-binding residues include aspartate 40, valine 41, valine 42, aspartate 59, and glutamate 112.

This sequence belongs to the GTP-dependent DPCK family.

It carries out the reaction 3'-dephospho-CoA + GTP = GDP + CoA + H(+). It participates in cofactor biosynthesis; coenzyme A biosynthesis. Functionally, catalyzes the GTP-dependent phosphorylation of the 3'-hydroxyl group of dephosphocoenzyme A to form coenzyme A (CoA). The sequence is that of GTP-dependent dephospho-CoA kinase from Methanospirillum hungatei JF-1 (strain ATCC 27890 / DSM 864 / NBRC 100397 / JF-1).